The chain runs to 1171 residues: DNA-directed RNA polymerase subunit beta' (1171 aa).

Residues C60, C62, C75, and C78 each contribute to the Zn(2+) site. Residues 299 to 319 (GRRGKPVTGPGNRPLKSLSDM) are disordered. The Mg(2+) site is built by D449, D451, and D453. Residues C790, C864, C871, and C874 each coordinate Zn(2+).

Belongs to the RNA polymerase beta' chain family. The RNAP catalytic core consists of 2 alpha, 1 beta, 1 beta' and 1 omega subunit. When a sigma factor is associated with the core the holoenzyme is formed, which can initiate transcription. Mg(2+) is required as a cofactor. It depends on Zn(2+) as a cofactor.

The catalysed reaction is RNA(n) + a ribonucleoside 5'-triphosphate = RNA(n+1) + diphosphate. Functionally, DNA-dependent RNA polymerase catalyzes the transcription of DNA into RNA using the four ribonucleoside triphosphates as substrates. The chain is DNA-directed RNA polymerase subunit beta' from Alkaliphilus metalliredigens (strain QYMF).